The sequence spans 176 residues: Large ribosomal subunit protein uL6 (176 aa).

Over residues 153–170 the composition is skewed to basic and acidic residues; sequence PEPYKGKGIRYGDEEVRR. Residues 153–176 form a disordered region; that stretch reads PEPYKGKGIRYGDEEVRRKEAKKK.

It belongs to the universal ribosomal protein uL6 family. In terms of assembly, part of the 50S ribosomal subunit.

Its function is as follows. This protein binds to the 23S rRNA, and is important in its secondary structure. It is located near the subunit interface in the base of the L7/L12 stalk, and near the tRNA binding site of the peptidyltransferase center. This is Large ribosomal subunit protein uL6 from Chromohalobacter salexigens (strain ATCC BAA-138 / DSM 3043 / CIP 106854 / NCIMB 13768 / 1H11).